The chain runs to 410 residues: Histidine--tRNA ligase (410 aa).

This sequence belongs to the class-II aminoacyl-tRNA synthetase family. As to quaternary structure, homodimer.

The protein localises to the cytoplasm. It carries out the reaction tRNA(His) + L-histidine + ATP = L-histidyl-tRNA(His) + AMP + diphosphate + H(+). This is Histidine--tRNA ligase from Campylobacter hominis (strain ATCC BAA-381 / DSM 21671 / CCUG 45161 / LMG 19568 / NCTC 13146 / CH001A).